The following is a 314-amino-acid chain: Acetyl-coenzyme A carboxylase carboxyl transferase subunit alpha (314 aa).

Positions 32–289 (EIDMLEASLK…KKMFLKHLNE (258 aa)) constitute a CoA carboxyltransferase C-terminal domain.

Belongs to the AccA family. Acetyl-CoA carboxylase is a heterohexamer composed of biotin carboxyl carrier protein (AccB), biotin carboxylase (AccC) and two subunits each of ACCase subunit alpha (AccA) and ACCase subunit beta (AccD).

Its subcellular location is the cytoplasm. It carries out the reaction N(6)-carboxybiotinyl-L-lysyl-[protein] + acetyl-CoA = N(6)-biotinyl-L-lysyl-[protein] + malonyl-CoA. It functions in the pathway lipid metabolism; malonyl-CoA biosynthesis; malonyl-CoA from acetyl-CoA: step 1/1. Functionally, component of the acetyl coenzyme A carboxylase (ACC) complex. First, biotin carboxylase catalyzes the carboxylation of biotin on its carrier protein (BCCP) and then the CO(2) group is transferred by the carboxyltransferase to acetyl-CoA to form malonyl-CoA. This is Acetyl-coenzyme A carboxylase carboxyl transferase subunit alpha from Staphylococcus epidermidis (strain ATCC 35984 / DSM 28319 / BCRC 17069 / CCUG 31568 / BM 3577 / RP62A).